A 333-amino-acid polypeptide reads, in one-letter code: L-lactate dehydrogenase B chain (333 aa).

NAD(+)-binding positions include 29–57 and R99; that span reads GQVG…LEDK. Substrate is bound by residues R106, N138, and R169. N138 is an NAD(+) binding site. H193 serves as the catalytic Proton acceptor. T248 serves as a coordination point for substrate.

It belongs to the LDH/MDH superfamily. LDH family. As to quaternary structure, homotetramer.

It localises to the cytoplasm. It carries out the reaction (S)-lactate + NAD(+) = pyruvate + NADH + H(+). The protein operates within fermentation; pyruvate fermentation to lactate; (S)-lactate from pyruvate: step 1/1. Functionally, interconverts simultaneously and stereospecifically pyruvate and lactate with concomitant interconversion of NADH and NAD(+). The polypeptide is L-lactate dehydrogenase B chain (LDHB) (Pelodiscus sinensis japonicus (Chinese soft-shelled turtle)).